A 1005-amino-acid chain; its full sequence is Protein TIC 214 (1005 aa).

The next 6 helical transmembrane spans lie at 25–45, 67–87, 91–111, 131–151, 177–197, and 304–324; these read VGLY…LFLL, FFTG…HLAL, HTIL…SNSG, SFQL…SVLG, FVGW…VFVW, and LFSI…PLLY. Disordered regions lie at residues 457 to 481 and 767 to 833; these read VEEG…EREE and KKKK…KRKQ. Basic residues predominate over residues 783-810; that stretch reads KQKKVKSKQKKVKSKQKKVKSKQKKVKS. Positions 811-824 are enriched in basic and acidic residues; that stretch reads KQNEIKSKQNEIKS.

It belongs to the TIC214 family. In terms of assembly, part of the Tic complex.

It is found in the plastid. It localises to the chloroplast inner membrane. In terms of biological role, involved in protein precursor import into chloroplasts. May be part of an intermediate translocation complex acting as a protein-conducting channel at the inner envelope. This Oenothera berteroana (Bertero's evening primrose) protein is Protein TIC 214.